A 331-amino-acid polypeptide reads, in one-letter code: Malate dehydrogenase (331 aa).

An NAD(+)-binding site is contributed by 14-20 (GAAGSIG). Residues Arg95 and Arg101 each contribute to the substrate site. NAD(+) is bound by residues Asn108, Gln115, and 132 to 134 (VGN). Asn134 and Arg165 together coordinate substrate. Residue His190 is the Proton acceptor of the active site.

Belongs to the LDH/MDH superfamily. MDH type 2 family.

The enzyme catalyses (S)-malate + NAD(+) = oxaloacetate + NADH + H(+). Catalyzes the reversible oxidation of malate to oxaloacetate. The polypeptide is Malate dehydrogenase (Rhodococcus opacus (strain B4)).